The following is a 397-amino-acid chain: Translocase of chloroplast 34 homolog, chloroplastic (397 aa).

The disordered stretch occupies residues 1 to 72 (MAQPPRPAEE…SQPWAGLNRL (72 aa)). 2 stretches are compositionally biased toward acidic residues: residues 10–32 (EYDDDVQEDEDELKEGELDDDES) and 44–63 (AGDEEAEDDEQDEEDGDEDS). The AIG1-type G domain maps to 90-321 (RKQLTVLLLG…YKYHPRLSSK (232 aa)). The tract at residues 99 to 106 (GKSSVGKS) is G1. GTP contacts are provided by residues 102 to 107 (SVGKSS) and 121 to 126 (QAFKLQ). Ser106 is a Mg(2+) binding site. Residues 121–124 (QAFK) are homodimerization. The interval 126–130 (QADTD) is G2. Residues 155-158 (DTCG) are G3. The interval 193–198 (RLDLYR) is homodimerization. Residues 227 to 230 (THAN) are G4. Residues His228 and 271–272 (EN) contribute to the GTP site. Residues 271 to 273 (ENS) form a G5 region. A helical transmembrane segment spans residues 329 to 349 (LLPVAIAAEVLFYRRFLHPRL). The short motif at 350 to 358 (DDNQRRVER) is the AKR2A-binding sequence (ABS) required for chloroplast outer envelope membrane targeting element.

This sequence belongs to the TRAFAC class TrmE-Era-EngA-EngB-Septin-like GTPase superfamily. AIG1/Toc34/Toc159-like paraseptin GTPase family. TOC34 subfamily. Homodimer, heterodimer with other TOC proteins, and monomer. Part of the TOC core complex that includes 1 protein for the specific recognition of transit peptides surrounded by a ring composed of four proteins forming translocation channels, and four to five GTP-binding proteins providing energy. This core complex can interact with components of the TIC complex to form a larger import complex. Interacts with ARSA1. Requires Mg(2+) as cofactor.

It localises to the plastid. The protein localises to the chloroplast outer membrane. In terms of biological role, GTPase involved in protein precursor import into chloroplasts. Seems to recognize chloroplast-destined precursor proteins and regulate their presentation to the translocation channel through GTP hydrolysis. Functions as an essential component of the outer chloroplast membrane translocon (TOC) complex, which, in turn, catalyzes the import of nucleus-encoded precursor polypeptides from the cytoplasm to the chloroplast. The protein is Translocase of chloroplast 34 homolog, chloroplastic of Chlamydomonas reinhardtii (Chlamydomonas smithii).